We begin with the raw amino-acid sequence, 316 residues long: GTP cyclohydrolase FolE2 2 (316 aa).

The protein belongs to the GTP cyclohydrolase IV family.

The enzyme catalyses GTP + H2O = 7,8-dihydroneopterin 3'-triphosphate + formate + H(+). The protein operates within cofactor biosynthesis; 7,8-dihydroneopterin triphosphate biosynthesis; 7,8-dihydroneopterin triphosphate from GTP: step 1/1. In terms of biological role, converts GTP to 7,8-dihydroneopterin triphosphate. In Burkholderia orbicola (strain MC0-3), this protein is GTP cyclohydrolase FolE2 2.